The primary structure comprises 439 residues: Cobyrinate a,c-diamide synthase (439 aa).

The region spanning 238–431 (KIAVAYDKAF…AHVNFLGNIE (194 aa)) is the GATase cobBQ-type domain. Residue Cys-320 is the Nucleophile of the active site.

It belongs to the CobB/CbiA family. It depends on Mg(2+) as a cofactor.

It carries out the reaction cob(II)yrinate + 2 L-glutamine + 2 ATP + 2 H2O = cob(II)yrinate a,c diamide + 2 L-glutamate + 2 ADP + 2 phosphate + 2 H(+). It functions in the pathway cofactor biosynthesis; adenosylcobalamin biosynthesis; cob(II)yrinate a,c-diamide from sirohydrochlorin (anaerobic route): step 10/10. Its function is as follows. Catalyzes the ATP-dependent amidation of the two carboxylate groups at positions a and c of cobyrinate, using either L-glutamine or ammonia as the nitrogen source. In Clostridium tetani (strain Massachusetts / E88), this protein is Cobyrinate a,c-diamide synthase.